Reading from the N-terminus, the 209-residue chain is Uracil phosphoribosyltransferase (209 aa).

Residues Arg-79, Arg-104, and 131–139 each bind 5-phospho-alpha-D-ribose 1-diphosphate; that span reads DPMLATGGS. Uracil-binding positions include Ile-194 and 199–201; that span reads GDA. Asp-200 provides a ligand contact to 5-phospho-alpha-D-ribose 1-diphosphate.

It belongs to the UPRTase family. Mg(2+) is required as a cofactor.

It catalyses the reaction UMP + diphosphate = 5-phospho-alpha-D-ribose 1-diphosphate + uracil. It functions in the pathway pyrimidine metabolism; UMP biosynthesis via salvage pathway; UMP from uracil: step 1/1. Allosterically activated by GTP. Catalyzes the conversion of uracil and 5-phospho-alpha-D-ribose 1-diphosphate (PRPP) to UMP and diphosphate. In Macrococcus caseolyticus (strain JCSC5402) (Macrococcoides caseolyticum), this protein is Uracil phosphoribosyltransferase.